The following is a 294-amino-acid chain: MSPSRPGFSCSWLPYLLVLPQLAITAIFFLWPAGEALWYSVQTLDPFGLSSEFVGLSNFIQLFQDEYYLASFYTTLIFSALVAGIGLNVSLFLAAMVDYVLRGSRLYQTLLILPYAVAPAVAAVLWIFLFDPGLGLITHALAKLGYSWNHAQNSGQAMFLVVLASVWKQISYNFLFFLAALQSIPKSLVEAAAIDGAGPVRRFFNLVLPLISPVSFFLLVVNLVYAFFDTFPVIDAATGGGPVQATTTLIYKIYREGFAGLDLSSSAAQSVILMLLVIGLTVIQFRFVERKVRY.

At 1–11 the chain is on the cytoplasmic side; that stretch reads MSPSRPGFSCS. The helical transmembrane segment at 12-32 threads the bilayer; that stretch reads WLPYLLVLPQLAITAIFFLWP. Residues 33-80 lie on the Periplasmic side of the membrane; the sequence is AGEALWYSVQTLDPFGLSSEFVGLSNFIQLFQDEYYLASFYTTLIFSA. The ABC transmembrane type-1 domain occupies 72 to 284; that stretch reads FYTTLIFSAL…LLVIGLTVIQ (213 aa). The chain crosses the membrane as a helical span at residues 81–101; sequence LVAGIGLNVSLFLAAMVDYVL. Over 102–109 the chain is Cytoplasmic; that stretch reads RGSRLYQT. A helical membrane pass occupies residues 110-130; the sequence is LLILPYAVAPAVAAVLWIFLF. The Periplasmic portion of the chain corresponds to 131 to 157; that stretch reads DPGLGLITHALAKLGYSWNHAQNSGQA. Residues 158-178 form a helical membrane-spanning segment; sequence MFLVVLASVWKQISYNFLFFL. Residues 179–207 are Cytoplasmic-facing; sequence AALQSIPKSLVEAAAIDGAGPVRRFFNLV. Residues 208–228 form a helical membrane-spanning segment; the sequence is LPLISPVSFFLLVVNLVYAFF. Topologically, residues 229 to 262 are periplasmic; that stretch reads DTFPVIDAATGGGPVQATTTLIYKIYREGFAGLD. Residues 263 to 283 traverse the membrane as a helical segment; sequence LSSSAAQSVILMLLVIGLTVI. Topologically, residues 284–294 are cytoplasmic; it reads QFRFVERKVRY.

This sequence belongs to the binding-protein-dependent transport system permease family. UgpAE subfamily. In terms of assembly, the complex is composed of two ATP-binding proteins (UgpC), two transmembrane proteins (UgpA and UgpE) and a solute-binding protein (UgpB).

It localises to the cell inner membrane. Its function is as follows. Part of the ABC transporter complex UgpBAEC involved in sn-glycerol-3-phosphate (G3P) import. Probably responsible for the translocation of the substrate across the membrane. The chain is sn-glycerol-3-phosphate transport system permease protein UgpA (ugpA) from Yersinia pseudotuberculosis serotype I (strain IP32953).